The sequence spans 94 residues: Co-chaperonin GroES (94 aa).

It belongs to the GroES chaperonin family. In terms of assembly, heptamer of 7 subunits arranged in a ring. Interacts with the chaperonin GroEL.

The protein localises to the cytoplasm. Its function is as follows. Together with the chaperonin GroEL, plays an essential role in assisting protein folding. The GroEL-GroES system forms a nano-cage that allows encapsulation of the non-native substrate proteins and provides a physical environment optimized to promote and accelerate protein folding. GroES binds to the apical surface of the GroEL ring, thereby capping the opening of the GroEL channel. The sequence is that of Co-chaperonin GroES from Geobacillus stearothermophilus (Bacillus stearothermophilus).